The chain runs to 76 residues: Small ribosomal subunit protein bS18 (76 aa).

This sequence belongs to the bacterial ribosomal protein bS18 family. Part of the 30S ribosomal subunit. Forms a tight heterodimer with protein bS6.

Functionally, binds as a heterodimer with protein bS6 to the central domain of the 16S rRNA, where it helps stabilize the platform of the 30S subunit. The protein is Small ribosomal subunit protein bS18 of Alcanivorax borkumensis (strain ATCC 700651 / DSM 11573 / NCIMB 13689 / SK2).